Here is a 241-residue protein sequence, read N- to C-terminus: Methylthioribulose-1-phosphate dehydratase (241 aa).

C100 contacts substrate. Residues H117 and H119 each coordinate Zn(2+). E146 acts as the Proton donor/acceptor in catalysis. H202 is a Zn(2+) binding site.

The protein belongs to the aldolase class II family. MtnB subfamily. It depends on Zn(2+) as a cofactor.

It is found in the cytoplasm. The catalysed reaction is 5-(methylsulfanyl)-D-ribulose 1-phosphate = 5-methylsulfanyl-2,3-dioxopentyl phosphate + H2O. The protein operates within amino-acid biosynthesis; L-methionine biosynthesis via salvage pathway; L-methionine from S-methyl-5-thio-alpha-D-ribose 1-phosphate: step 2/6. In terms of biological role, catalyzes the dehydration of methylthioribulose-1-phosphate (MTRu-1-P) into 2,3-diketo-5-methylthiopentyl-1-phosphate (DK-MTP-1-P). This Ajellomyces dermatitidis (strain ER-3 / ATCC MYA-2586) (Blastomyces dermatitidis) protein is Methylthioribulose-1-phosphate dehydratase.